The following is an 837-amino-acid chain: Outer membrane usher protein HifC (837 aa).

A signal peptide spans 1–26 (MKTKNFPLNKIAFACTLLLANPVAWA). C813 and C833 are joined by a disulfide.

This sequence belongs to the fimbrial export usher family.

It is found in the cell outer membrane. Functionally, essential for piliation. This chain is Outer membrane usher protein HifC (hifC), found in Haemophilus influenzae.